The following is a 662-amino-acid chain: Hypoxia-inducible factor 3-alpha (662 aa).

The tract at residues 1–25 (MDWDQDRSSTELRKEKSRDAARSRR) is disordered. The 54-residue stretch at 12-65 (LRKEKSRDAARSRRSQETEVLYQLAHTLPFARGVSAHLDKASIMRLTISYLRMH) folds into the bHLH domain. A nuclear localization signal region spans residues 75–98 (QVRKEGEPLDACYLKALEGFVMVL). PAS domains lie at 80–150 (GEPL…PSLS) and 225–295 (PHPA…LSKG). Residues 228 to 272 (ASLEPPLGRGAFLSRHSLDMKFTYCDERIAEVAGYSPDDLIGCSA) form a nuclear export signal region. Residues 352–379 (EQTEQHTRRPPQLGTSSKKGIPGNSLDP) are disordered. Positions 410 to 413 (LRRL) match the LRRLL motif. Disordered stretches follow at residues 417 to 445 (ILDGPPTAATPSTPQAARRPQSPLPADLP) and 459 to 480 (STARKNKTMETDLDIAQDPDTP). Low complexity predominate over residues 421–433 (PPTAATPSTPQAA). The segment at 448-581 (LAVGLENAHR…SEDKGLELLE (134 aa)) is ODD. Residues 450–501 (VGLENAHRLSTARKNKTMETDLDIAQDPDTPDLEMLAPYISMDDDFQLNSSE) form an NTAD region. A Glycyl lysine isopeptide (Lys-Gly) (interchain with G-Cter in ubiquitin) cross-link involves residue lysine 463. Over residues 469–480 (TDLDIAQDPDTP) the composition is skewed to acidic residues. The short motif at 485 to 492 (LAPYISMD) is the LAPYISMD element. 4-hydroxyproline is present on proline 487. The disordered stretch occupies residues 500-595 (SEQLPKVHRR…KRSPRLEPGS (96 aa)). Positions 505 to 521 (KVHRRPPRTARRPRARS) are enriched in basic residues. Lysine 565 is covalently cross-linked (Glycyl lysine isopeptide (Lys-Gly) (interchain with G-Cter in ubiquitin)). Basic and acidic residues predominate over residues 572–584 (SEDKGLELLETKP).

Interacts with ARNT, BAD, BCL2L2, EPAS1, HIF1A, MCL1 and VHL. In normoxia, hydroxylated on Pro-487 in the oxygen-dependent degradation domain (ODD) by PHD. The hydroxylated proline promotes interaction with VHL, initiating rapid ubiquitination and subsequent proteasomal degradation. In terms of processing, ubiquitinated; ubiquitination occurs in a VHL- and oxygen-dependent pathway and subsequently targeted for proteasomal degradation. As to expression, expressed in the perivenous zone of the liver. Expressed in all tissues examined during normoxia. Expressed in brain and lung. Expressed in periportal and perivenous hepatocytes and in endothelial cells of the central vein (at protein level). Highest expression seen in the cerebral cortex, hippocampus, and lung. Low expression in myocardial tissue and liver.

It is found in the nucleus. Its subcellular location is the cytoplasm. The protein resides in the nucleus speckle. The protein localises to the mitochondrion. Acts as a transcriptional regulator in adaptive response to low oxygen tension. Attenuates the ability of transcription factor HIF1A, EPAS1 and the HIF1A-ARNT complex to bind to hypoxia-responsive elements (HRE) located within the enhancer/promoter of hypoxia-inducible target genes and hence inhibits HRE-driven transcriptional activation. Functions as an inhibitor of angiogenesis in hypoxic cells of the cornea. Plays a role in the development of the cardiorespiratory system. May also be involved in apoptosis. May act as a tumor suppressor. The protein is Hypoxia-inducible factor 3-alpha of Rattus norvegicus (Rat).